Reading from the N-terminus, the 582-residue chain is MTVEEVGDDYTKDGTVDLQGNPVRRSIRGRWKACSFVVVYEVFERMAYYGISSNLFIYMTTKLHQGTVKSSNNVTNWVGTSWLTPILGAYVGDALLGRYITFVISCAIYFSGMMVLTLSVTIPGIKPPECSTTNVENCEKASVLQLAVFFGALYTLAIGTGGTKPNISTIGADQFDVFDPKEKTQKLSFFNWWMFSIFFGTLFANTVLVYVQDNVGWTLGYGLPTLGLAISITIFLLGTPFYRHKLPTGSPFTKMARVIVASFRKANAPMTHDITSFHELPSLEYERKGAFPIHPTPSLRFLDRASLKTGTNHKWNLCTTTEVEETKQMLRMLPVLFITFVPSMMLAQINTLFVKQGTTLDRKVTGSFSIPPASLSGFVTLSMLISIVLYDRVFVKITRKFTGNPRGITLLQRMGIGLIFHILIMIVASVTERYRLKVAADHGLIHQTGVKLPLTIFALLPQFVLMGMADSFLEVAKLEFFYDQAPESMKSLGTSYSTTSLAIGNFMSSFLLSTVSEITKKRGRGWILNNLNESRLDYYYLFFAVLNLVNFVLFLVVVKFYVYRAEVTDSVDVKEVEMKETE.

11 consecutive transmembrane segments (helical) span residues 77 to 97 (WVGTSWLTPILGAYVGDALLG), 100 to 120 (ITFVISCAIYFSGMMVLTLSV), 141 to 161 (ASVLQLAVFFGALYTLAIGTG), 189 to 209 (FFNWWMFSIFFGTLFANTVLV), 217 to 237 (WTLGYGLPTLGLAISITIFLL), 334 to 354 (PVLFITFVPSMMLAQINTLFV), 370 to 390 (IPPASLSGFVTLSMLISIVLY), 408 to 428 (ITLLQRMGIGLIFHILIMIVA), 452 to 472 (LPLTIFALLPQFVLMGMADSF), 493 to 515 (GTSYSTTSLAIGNFMSSFLLSTV), and 538 to 558 (YYYLFFAVLNLVNFVLFLVVV).

The protein belongs to the major facilitator superfamily. Proton-dependent oligopeptide transporter (POT/PTR) (TC 2.A.17) family. In terms of tissue distribution, expressed in roots. Detected in shoots, leaves and flowers.

It is found in the membrane. In terms of biological role, peptide transporter involved in stress tolerance in seeds during germination and in defense against virulent bacterial pathogens. The chain is Protein NRT1/ PTR FAMILY 5.2 (NPF5.2) from Arabidopsis thaliana (Mouse-ear cress).